The chain runs to 182 residues: Probable RNA 2'-phosphotransferase (182 aa).

The protein belongs to the KptA/TPT1 family.

Removes the 2'-phosphate from RNA via an intermediate in which the phosphate is ADP-ribosylated by NAD followed by a presumed transesterification to release the RNA and generate ADP-ribose 1''-2''-cyclic phosphate (APPR&gt;P). May function as an ADP-ribosylase. The protein is Probable RNA 2'-phosphotransferase of Trichormus variabilis (strain ATCC 29413 / PCC 7937) (Anabaena variabilis).